Reading from the N-terminus, the 291-residue chain is m-AAA protease-interacting protein 1, mitochondrial (291 aa).

The transit peptide at Met-1–Tyr-96 directs the protein to the mitochondrion.

As to quaternary structure, interacts with AFG3L2. Interacts with SPG7. Interacts with SMDT1/EMRE (via the N-terminal transit peptide); interaction is direct and takes place before maturation of SMDT1/EMRE.

The protein resides in the mitochondrion matrix. In terms of biological role, promotes sorting of SMDT1/EMRE in mitochondria by ensuring its maturation. Interacts with the transit peptide region of SMDT1/EMRE precursor protein in the mitochondrial matrix, leading to protect it against protein degradation by YME1L1, thereby ensuring SMDT1/EMRE maturation by the mitochondrial processing peptidase (PMPCA and PMPCB). In Homo sapiens (Human), this protein is m-AAA protease-interacting protein 1, mitochondrial.